A 422-amino-acid polypeptide reads, in one-letter code: Metallocarboxypeptidase A (422 aa).

A signal peptide spans 1-17 (MRSVLSFALLAANVVSA). The propeptide at 18-112 (AVLAPFDYSG…FEAYSAGYAP (95 aa)) is activation peptide. Residues 119–419 (SYHSYQDHLS…AGTVAMLKAV (301 aa)) form the Peptidase M14 domain. The Zn(2+) site is built by H179 and E182. Residues 179–182 (HARE), R237, and 254–255 (NR) each bind substrate. C248 and C271 are oxidised to a cystine. A Zn(2+)-binding site is contributed by H309. 310-311 (SY) is a binding site for substrate. Catalysis depends on E385, which acts as the Proton donor/acceptor.

Belongs to the peptidase M14 family. The cofactor is Zn(2+).

It localises to the secreted. Extracellular metalloprotease that contributes to pathogenicity. This is Metallocarboxypeptidase A (MCPA) from Arthroderma otae (strain ATCC MYA-4605 / CBS 113480) (Microsporum canis).